The sequence spans 545 residues: Ribulokinase (545 aa).

It belongs to the ribulokinase family.

It carries out the reaction D-ribulose + ATP = D-ribulose 5-phosphate + ADP + H(+). The catalysed reaction is L-ribulose + ATP = L-ribulose 5-phosphate + ADP + H(+). It functions in the pathway carbohydrate degradation; L-arabinose degradation via L-ribulose; D-xylulose 5-phosphate from L-arabinose (bacterial route): step 2/3. The polypeptide is Ribulokinase (Staphylococcus aureus (strain MSSA476)).